Consider the following 210-residue polypeptide: UPF0301 protein OCAR_7326/OCA5_c07920 (210 aa).

It belongs to the UPF0301 (AlgH) family.

The polypeptide is UPF0301 protein OCAR_7326/OCA5_c07920 (Afipia carboxidovorans (strain ATCC 49405 / DSM 1227 / KCTC 32145 / OM5) (Oligotropha carboxidovorans)).